Here is a 266-residue protein sequence, read N- to C-terminus: Probable metal transport system membrane protein TP_0036 (266 aa).

A run of 8 helical transmembrane segments spans residues 10 to 30 (AFVASFLIALLCPLVGMHLVL), 34 to 54 (ALMGDALAHGSLAGVSIAVSC), 56 to 76 (IHPGWGSFFFTALVGVLIEFL), 88 to 108 (LSIVLSLSVGIAVTLLSSGLI), 120 to 140 (ILVVSTRDLWIMLALSVFCVG), 172 to 192 (VASVVISATIAASIKITGILV), 211 to 231 (FLLTLVAAFLFSMLDTALGLV), and 238 to 258 (VAPGGFTALVSVVVLMLVIAL).

The protein belongs to the ABC-3 integral membrane protein family.

It is found in the cell inner membrane. Part of an ATP-driven transport system TP_0034/TP_0035/TP_0036 for a metal. The sequence is that of Probable metal transport system membrane protein TP_0036 from Treponema pallidum (strain Nichols).